We begin with the raw amino-acid sequence, 500 residues long: Cytosol aminopeptidase (500 aa).

The Mn(2+) site is built by Lys-265 and Asp-270. Lys-277 is an active-site residue. Residues Asp-288, Asp-347, and Glu-349 each coordinate Mn(2+). The active site involves Arg-351.

It belongs to the peptidase M17 family. Mn(2+) is required as a cofactor.

The protein resides in the cytoplasm. The catalysed reaction is Release of an N-terminal amino acid, Xaa-|-Yaa-, in which Xaa is preferably Leu, but may be other amino acids including Pro although not Arg or Lys, and Yaa may be Pro. Amino acid amides and methyl esters are also readily hydrolyzed, but rates on arylamides are exceedingly low.. The enzyme catalyses Release of an N-terminal amino acid, preferentially leucine, but not glutamic or aspartic acids.. Its function is as follows. Presumably involved in the processing and regular turnover of intracellular proteins. Catalyzes the removal of unsubstituted N-terminal amino acids from various peptides. This Rickettsia prowazekii (strain Madrid E) protein is Cytosol aminopeptidase (pepA).